We begin with the raw amino-acid sequence, 420 residues long: Gamma-glutamyl phosphate reductase (420 aa).

The protein belongs to the gamma-glutamyl phosphate reductase family.

It localises to the cytoplasm. The enzyme catalyses L-glutamate 5-semialdehyde + phosphate + NADP(+) = L-glutamyl 5-phosphate + NADPH + H(+). It participates in amino-acid biosynthesis; L-proline biosynthesis; L-glutamate 5-semialdehyde from L-glutamate: step 2/2. Its function is as follows. Catalyzes the NADPH-dependent reduction of L-glutamate 5-phosphate into L-glutamate 5-semialdehyde and phosphate. The product spontaneously undergoes cyclization to form 1-pyrroline-5-carboxylate. The sequence is that of Gamma-glutamyl phosphate reductase from Neisseria meningitidis serogroup A / serotype 4A (strain DSM 15465 / Z2491).